The primary structure comprises 194 residues: Large ribosomal subunit protein bL9 (194 aa).

The disordered stretch occupies residues 169-194 (DDINDNARPENFFDPNAEFDGGEDNA).

This sequence belongs to the bacterial ribosomal protein bL9 family.

Its function is as follows. Binds to the 23S rRNA. This Mesorhizobium japonicum (strain LMG 29417 / CECT 9101 / MAFF 303099) (Mesorhizobium loti (strain MAFF 303099)) protein is Large ribosomal subunit protein bL9.